Consider the following 426-residue polypeptide: Citrate synthase (426 aa).

Active-site residues include His-314 and Asp-372.

The protein belongs to the citrate synthase family.

It carries out the reaction oxaloacetate + acetyl-CoA + H2O = citrate + CoA + H(+). It functions in the pathway carbohydrate metabolism; tricarboxylic acid cycle; isocitrate from oxaloacetate: step 1/2. This chain is Citrate synthase (gltA), found in Helicobacter pylori (strain J99 / ATCC 700824) (Campylobacter pylori J99).